Reading from the N-terminus, the 52-residue chain is Insulin (52 aa).

3 cysteine pairs are disulfide-bonded: Cys9–Cys38, Cys21–Cys51, and Cys37–Cys42.

The protein belongs to the insulin family. Heterodimer of a B chain and an A chain linked by two disulfide bonds.

The protein resides in the secreted. Its function is as follows. Insulin decreases blood glucose concentration. It increases cell permeability to monosaccharides, amino acids and fatty acids. It accelerates glycolysis, the pentose phosphate cycle, and glycogen synthesis in liver. This is Insulin (ins) from Piaractus mesopotamicus (Small-scaled pacu).